We begin with the raw amino-acid sequence, 249 residues long: Triosephosphate isomerase (249 aa).

8–10 serves as a coordination point for substrate; it reads NWK. Histidine 95 acts as the Electrophile in catalysis. Glutamate 166 (proton acceptor) is an active-site residue. Substrate contacts are provided by residues glycine 172, serine 211, and 232-233; that span reads GG.

Belongs to the triosephosphate isomerase family. As to quaternary structure, homodimer.

It is found in the cytoplasm. It catalyses the reaction D-glyceraldehyde 3-phosphate = dihydroxyacetone phosphate. Its pathway is carbohydrate biosynthesis; gluconeogenesis. It participates in carbohydrate degradation; glycolysis; D-glyceraldehyde 3-phosphate from glycerone phosphate: step 1/1. In terms of biological role, involved in the gluconeogenesis. Catalyzes stereospecifically the conversion of dihydroxyacetone phosphate (DHAP) to D-glyceraldehyde-3-phosphate (G3P). This is Triosephosphate isomerase from Granulibacter bethesdensis (strain ATCC BAA-1260 / CGDNIH1).